The sequence spans 270 residues: Putative phosphoenolpyruvate synthase regulatory protein (270 aa).

Residue 150 to 157 participates in ADP binding; the sequence is GVSRCGKT.

This sequence belongs to the pyruvate, phosphate/water dikinase regulatory protein family. PSRP subfamily.

The enzyme catalyses [pyruvate, water dikinase] + ADP = [pyruvate, water dikinase]-phosphate + AMP + H(+). The catalysed reaction is [pyruvate, water dikinase]-phosphate + phosphate + H(+) = [pyruvate, water dikinase] + diphosphate. Its function is as follows. Bifunctional serine/threonine kinase and phosphorylase involved in the regulation of the phosphoenolpyruvate synthase (PEPS) by catalyzing its phosphorylation/dephosphorylation. This chain is Putative phosphoenolpyruvate synthase regulatory protein, found in Shewanella loihica (strain ATCC BAA-1088 / PV-4).